The sequence spans 706 residues: Termination factor NPH-I homolog (706 aa).

One can recognise a Helicase ATP-binding domain in the interval 62–227; the sequence is IGQGENTRGL…VPCFNMLSGR (166 aa). 75–82 contributes to the ATP binding site; sequence HQMGMGKT. The short motif at 168 to 171 is the DEAH box element; that stretch reads DEAH. The region spanning 417 to 599 is the Helicase C-terminal domain; the sequence is QCLQPLKVLE…HLNSAFRDLL (183 aa).

This sequence belongs to the DEAD box helicase family. DEAH subfamily. As to quaternary structure, part of the viral DNA-directed RNA polymerase that consists of 8 polII-like subunits (RPB1, RPB2, RPB3, RPB5, RPB6, RPB7, RPB9, RPB10), a capping enzyme and a termination factor.

Its subcellular location is the virion. In terms of biological role, putative DNA-dependent ATPase required for providing the needed energy to achieve the termination of early transcripts. This African swine fever virus (isolate Tick/South Africa/Pretoriuskop Pr4/1996) (ASFV) protein is Termination factor NPH-I homolog.